The sequence spans 177 residues: R-phycoerythrin beta chain (177 aa).

Residues Cys50 and Cys61 each coordinate phycourobilin. The residue at position 72 (Asn72) is an N4-methylasparagine. Cys82 and Cys158 together coordinate (2R,3E)-phycoerythrobilin.

The protein belongs to the phycobiliprotein family. In terms of assembly, heterodimer of an alpha and a beta chain. Post-translationally, contains two covalently linked phycoerythrobilin chromophores and one covalently linked phycourobilin chromophore.

It is found in the plastid. The protein resides in the chloroplast thylakoid membrane. Functionally, light-harvesting photosynthetic bile pigment-protein from the phycobiliprotein complex. In Lophosiphonia boldii (Red alga), this protein is R-phycoerythrin beta chain (cpeB).